The chain runs to 222 residues: Glycerol-3-phosphate acyltransferase (222 aa).

Helical transmembrane passes span 4-24 (ALLLCLCLLLITYLMGSIPTG), 56-76 (PAAIAVLAIDISKGVMAVALV), 87-107 (ALPAAWQNWLTLGVAIAVVLG), 130-150 (FMLNIWLALGTLATFLTVIFF), 153-173 (IVSLSSIVAAIAVNGIALALQ), and 174-191 (LPPPYLAFTFLAGMYVIV).

It belongs to the PlsY family. In terms of assembly, probably interacts with PlsX.

It localises to the cell inner membrane. It catalyses the reaction an acyl phosphate + sn-glycerol 3-phosphate = a 1-acyl-sn-glycero-3-phosphate + phosphate. It participates in lipid metabolism; phospholipid metabolism. Functionally, catalyzes the transfer of an acyl group from acyl-phosphate (acyl-PO(4)) to glycerol-3-phosphate (G3P) to form lysophosphatidic acid (LPA). This enzyme utilizes acyl-phosphate as fatty acyl donor, but not acyl-CoA or acyl-ACP. The sequence is that of Glycerol-3-phosphate acyltransferase from Synechocystis sp. (strain ATCC 27184 / PCC 6803 / Kazusa).